The chain runs to 346 residues: GTPase Obg (346 aa).

Positions 1-158 (MFVDECVVKL…GTYRLVLKSI (158 aa)) constitute an Obg domain. Residues 159 to 332 (ADVGLVGFPN…LKKELLKRVT (174 aa)) enclose the OBG-type G domain. Residues 165–172 (GFPNAGKS), 190–194 (FTTLH), 216–219 (DVPG), 286–289 (NKMD), and 313–315 (SCL) contribute to the GTP site. Residues Ser-172 and Thr-192 each contribute to the Mg(2+) site.

Belongs to the TRAFAC class OBG-HflX-like GTPase superfamily. OBG GTPase family. Monomer. Requires Mg(2+) as cofactor.

Its subcellular location is the cytoplasm. Its function is as follows. An essential GTPase which binds GTP, GDP and possibly (p)ppGpp with moderate affinity, with high nucleotide exchange rates and a fairly low GTP hydrolysis rate. Plays a role in control of the cell cycle, stress response, ribosome biogenesis and in those bacteria that undergo differentiation, in morphogenesis control. This chain is GTPase Obg, found in Opitutus terrae (strain DSM 11246 / JCM 15787 / PB90-1).